We begin with the raw amino-acid sequence, 447 residues long: Phosphoglucosamine mutase (447 aa).

The Phosphoserine intermediate role is filled by S102. 4 residues coordinate Mg(2+): S102, D241, D243, and D245. Residue S102 is modified to Phosphoserine.

This sequence belongs to the phosphohexose mutase family. The cofactor is Mg(2+). In terms of processing, activated by phosphorylation.

The enzyme catalyses alpha-D-glucosamine 1-phosphate = D-glucosamine 6-phosphate. Functionally, catalyzes the conversion of glucosamine-6-phosphate to glucosamine-1-phosphate. This chain is Phosphoglucosamine mutase, found in Pseudomonas syringae pv. tomato (strain ATCC BAA-871 / DC3000).